Consider the following 536-residue polypeptide: Coilin (536 aa).

The disordered stretch occupies residues 96-316 (AETCNDGAQN…QHSQSPTSDS (221 aa)). Positions 171–180 (KTHKGKRTKK) are enriched in basic residues. Basic and acidic residues predominate over residues 181–192 (KSEAPIENPPDK). Positions 213–238 (QTSSSDSSDTSSCSDQPTPTTQQKPQ) are enriched in low complexity. 2 stretches are compositionally biased toward polar residues: residues 239 to 257 (SSAKRQNQAATRESVTHSV) and 303 to 316 (THIQQHSQSPTSDS). Repeat copies occupy residues 353–358 (RGRGRG) and 380–385 (RGRGRG). Residues 353–385 (RGRGRGEDFSWRGQRGRWFRGQGNNSNRGRGRG) form a 2 X 6 AA repeats of R-G-R-G-R-G region. A disordered region spans residues 368-387 (GRWFRGQGNNSNRGRGRGDS). The segment covering 371-380 (FRGQGNNSNR) has biased composition (low complexity). Residues 425–523 (DYSSLPLLAA…VMLNWNTLIE (99 aa)) enclose the Tudor; atypical domain.

This sequence belongs to the coilin family. As to expression, expressed in both oocytes and somatic cells.

The protein resides in the nucleus. This chain is Coilin (coil), found in Xenopus laevis (African clawed frog).